Consider the following 299-residue polypeptide: Probable tyrosine phosphatase protein J4 (299 aa).

The Tyrosine-protein phosphatase domain maps to 16–289 (VEALDFLSFM…VYCYQALYVW (274 aa)). The active-site Phosphocysteine intermediate is the C230.

Belongs to the protein-tyrosine phosphatase family.

The enzyme catalyses O-phospho-L-tyrosyl-[protein] + H2O = L-tyrosyl-[protein] + phosphate. In Microplitis demolitor bracovirus (isolate Webb) (MdBV), this protein is Probable tyrosine phosphatase protein J4 (J5).